The chain runs to 523 residues: 2-isopropylmalate synthase (523 aa).

The 263-residue stretch at 5 to 267 (VIIFDTTLRD…HTNINHHEIW (263 aa)) folds into the Pyruvate carboxyltransferase domain. Residues aspartate 14, histidine 202, histidine 204, and asparagine 238 each coordinate Mn(2+). Residues 392-523 (RLDYFNVQSG…QNKENNKETV (132 aa)) form a regulatory domain region.

It belongs to the alpha-IPM synthase/homocitrate synthase family. LeuA type 1 subfamily. In terms of assembly, homodimer. Mn(2+) serves as cofactor.

It localises to the cytoplasm. The catalysed reaction is 3-methyl-2-oxobutanoate + acetyl-CoA + H2O = (2S)-2-isopropylmalate + CoA + H(+). It functions in the pathway amino-acid biosynthesis; L-leucine biosynthesis; L-leucine from 3-methyl-2-oxobutanoate: step 1/4. Its function is as follows. Catalyzes the condensation of the acetyl group of acetyl-CoA with 3-methyl-2-oxobutanoate (2-ketoisovalerate) to form 3-carboxy-3-hydroxy-4-methylpentanoate (2-isopropylmalate). The protein is 2-isopropylmalate synthase of Klebsiella pneumoniae subsp. pneumoniae (strain ATCC 700721 / MGH 78578).